Consider the following 712-residue polypeptide: Autophagy-related protein 13 (712 aa).

Disordered stretches follow at residues Ala388–Pro443 and Gly568–Glu611. The segment covering Ser402–Gly415 has biased composition (low complexity). The interval Ser412–His420 is ATG17-binding. Positions Arg424–Asn439 are enriched in basic and acidic residues. The interval Thr441–Asp500 is ATG1-binding. Over residues Thr576–Asp585 the composition is skewed to acidic residues.

The protein belongs to the ATG13 family. Fungi subfamily. In terms of assembly, hypophosphorylated form interacts with ATG1 to form the ATG1-ATG13 kinase complex. The ATG1-ATG13 complex interacts with the ATG17-ATG29-ATG31 complex through direct interaction with ATG17. Interacts with VAC8. Post-translationally, hyperphosphorylated under nutrient-rich conditions. Starvation and TOR inactivation results in ATG13 partial dephosphorylation leading to ATG1-binding. Dephosphorylation induces ATG17-binding.

The protein localises to the cytoplasm. It localises to the preautophagosomal structure. Activates the ATG1 kinase in a nutritional condition dependent manner through the TOR pathway, leading to autophagy. Involved in ATG9 and ATG23 cycling through the pre-autophagosomal structure. Also involved in cytoplasm to vacuole transport (Cvt) and more specifically in Cvt vesicle formation. Seems to play a role in the switching machinery regulating the conversion between the Cvt pathway and autophagy. Finally, ATG13 is also required for glycogen storage during stationary phase. This chain is Autophagy-related protein 13, found in Kluyveromyces marxianus (strain DMKU3-1042 / BCC 29191 / NBRC 104275) (Yeast).